Reading from the N-terminus, the 331-residue chain is Trans-O-hydroxybenzylidenepyruvate hydratase-aldolase (331 aa).

Belongs to the DapA family.

The catalysed reaction is (3E)-4-(2-hydroxyphenyl)-2-oxobut-3-enoate + H2O = salicylaldehyde + pyruvate. The protein operates within aromatic compound metabolism; naphthalene degradation. Its function is as follows. Involved in the naphthalene upper catabolic pathway. Catalyzes the transformation of trans-O-hydroxybenzylidenepyruvate (THBPA) to salicylaldehyde and pyruvate. The reaction is reversible. Can also use substrate which carry trans-alpha,beta-unsaturated keto acid side chain and adjacent hydroxyl group such as trans-4-(3-hydroxy-2-thianaphthenyl)-2-oxo-but-3-enoate, trans-4-(3-hydroxy-2-benzofuranyl)-2-oxobut-3-enoate, and trans-4-(3-hydroxy-2-thienyl)-2-oxobut-3-enoate. The sequence is that of Trans-O-hydroxybenzylidenepyruvate hydratase-aldolase (nahE) from Pseudomonas putida (Arthrobacter siderocapsulatus).